The chain runs to 67 residues: Putative sodium channel alpha-toxin Acra5 (67 aa).

The LCN-type CS-alpha/beta domain maps to 2–65 (RDGYIMIKDT…VYGDRGVICR (64 aa)). Cystine bridges form between cysteine 13-cysteine 64, cysteine 17-cysteine 40, cysteine 26-cysteine 45, and cysteine 30-cysteine 47. Residue arginine 67 is a propeptide, removed by a carboxypeptidase.

Belongs to the long (4 C-C) scorpion toxin superfamily. Sodium channel inhibitor family. Alpha subfamily. Expressed by the venom gland.

It is found in the secreted. In terms of biological role, alpha toxins bind voltage-independently at site-3 of sodium channels (Nav) and inhibit the inactivation of the activated channels, thereby blocking neuronal transmission. This Androctonus crassicauda (Arabian fat-tailed scorpion) protein is Putative sodium channel alpha-toxin Acra5.